The primary structure comprises 309 residues: Foldase protein PrsA (309 aa).

The signal sequence occupies residues 1–22 (MKTRSKLAAGFLTLMSVATLAA). C23 carries N-palmitoyl cysteine lipidation. C23 carries the S-diacylglycerol cysteine lipid modification. The PpiC domain maps to 146–241 (TPETSVQVIK…TSYYIIKVTD (96 aa)).

This sequence belongs to the PrsA family.

The protein localises to the cell membrane. It carries out the reaction [protein]-peptidylproline (omega=180) = [protein]-peptidylproline (omega=0). Its function is as follows. Plays a major role in protein secretion by helping the post-translocational extracellular folding of several secreted proteins. This chain is Foldase protein PrsA, found in Streptococcus agalactiae serotype III (strain NEM316).